Reading from the N-terminus, the 257-residue chain is DNA repair protein RecO (257 aa).

The protein belongs to the RecO family.

Its function is as follows. Involved in DNA repair and RecF pathway recombination. In Streptococcus sanguinis (strain SK36), this protein is DNA repair protein RecO.